The following is a 226-amino-acid chain: Enolase-phosphatase E1 (226 aa).

2 residues coordinate Mg(2+): Asp-9 and Glu-11. Residues 115–116 (SS) and Lys-160 contribute to the substrate site. Asp-185 serves as a coordination point for Mg(2+).

This sequence belongs to the HAD-like hydrolase superfamily. MasA/MtnC family. Monomer. Mg(2+) serves as cofactor.

Its subcellular location is the cytoplasm. It localises to the nucleus. The catalysed reaction is 5-methylsulfanyl-2,3-dioxopentyl phosphate + H2O = 1,2-dihydroxy-5-(methylsulfanyl)pent-1-en-3-one + phosphate. The protein operates within amino-acid biosynthesis; L-methionine biosynthesis via salvage pathway; L-methionine from S-methyl-5-thio-alpha-D-ribose 1-phosphate: step 3/6. Its pathway is amino-acid biosynthesis; L-methionine biosynthesis via salvage pathway; L-methionine from S-methyl-5-thio-alpha-D-ribose 1-phosphate: step 4/6. Functionally, bifunctional enzyme that catalyzes the enolization of 2,3-diketo-5-methylthiopentyl-1-phosphate (DK-MTP-1-P) into the intermediate 2-hydroxy-3-keto-5-methylthiopentenyl-1-phosphate (HK-MTPenyl-1-P), which is then dephosphorylated to form the acireductone 1,2-dihydroxy-3-keto-5-methylthiopentene (DHK-MTPene). The protein is Enolase-phosphatase E1 of Zygosaccharomyces rouxii (strain ATCC 2623 / CBS 732 / NBRC 1130 / NCYC 568 / NRRL Y-229).